The sequence spans 508 residues: H/ACA ribonucleoprotein complex subunit 4 (508 aa).

Residues 1–29 (MADVEVRKEKKKKKIKEEPLDGDDIGTLQ) are disordered. D123 (nucleophile) is an active-site residue. One can recognise a PUA domain in the interval 294–369 (HKRIIMKDSS…VVAKIKRVIM (76 aa)). Residues 423-508 (AAQEVSPTNG…KDRDRDEAQE (86 aa)) are disordered. Residue S442 is modified to Phosphoserine. Positions 442–457 (STSSVEETAAAAVSEE) are enriched in low complexity. Residue T443 is modified to Phosphothreonine. Phosphoserine is present on residues S444 and S445. Phosphothreonine is present on T449. The residue at position 455 (S455) is a Phosphoserine. Residue T458 is modified to Phosphothreonine. Acidic residues predominate over residues 475 to 485 (EAPEAAEEEAE). Residues 499–508 (KDRDRDEAQE) are compositionally biased toward basic and acidic residues.

It belongs to the pseudouridine synthase TruB family. Component of the box H/ACA small nucleolar ribonucleoprotein (H/ACA snoRNP) complex consisting of Nop60B, Gar1, NPH2 and Nop10, and associated with H/ACA-type snoRNAs. As to expression, expressed at higher levels in females than in males. In terms of tissue distribution, expressed almost exclusively in females with high levels of expression in the ovary.

The protein resides in the nucleus. It is found in the nucleolus. It catalyses the reaction a uridine in RNA = a pseudouridine in RNA. Catalytic subunit of the box H/ACA small nucleolar ribonucleoprotein (H/ACA snoRNP) complex, which catalyzes pseudouridylation of rRNA. This involves the isomerization of uridine such that the ribose is subsequently attached to C5, instead of the normal N1. Pseudouridine ('psi') residues may serve to stabilize the conformation of rRNAs. Required for ribosome biogenesis; plays a central role in ribosomal RNA processing. H/ACA snoRNP complex-dependent ribosome biogenesis is important in female germline cell differentiation during oogenesis. Essential for viability and female fertility. Required for maintenance of the germline stem cell lineage during spermatogenesis. The polypeptide is H/ACA ribonucleoprotein complex subunit 4 (Drosophila melanogaster (Fruit fly)).